The sequence spans 226 residues: Histone H1.5 (226 aa).

Residues Met-1–Glu-16 are compositionally biased toward low complexity. Positions Met-1–Ser-44 are disordered. An N-acetylserine; partial modification is found at Ser-2. Ser-2 carries the post-translational modification Phosphoserine. Thr-11 carries the post-translational modification Phosphothreonine; by GSK3. Residue Lys-17 is modified to N6-acetyllysine. The residue at position 18 (Ser-18) is a Phosphoserine. At Lys-27 the chain carries N6-methyllysine. Residue Lys-37 is modified to N6-(beta-hydroxybutyryl)lysine; alternate. Lys-37 bears the N6-succinyllysine; alternate mark. Phosphothreonine is present on Thr-39. Positions Thr-39–Lys-112 constitute an H15 domain. An N6-acetyllysine modification is found at Lys-49. The residue at position 55 (Lys-55) is an N6-(beta-hydroxybutyryl)lysine. Arg-57 is subject to Citrulline. Residue Lys-67 is modified to N6-(beta-hydroxybutyryl)lysine. Residue Lys-78 is modified to N6-acetyllysine. An N6-(beta-hydroxybutyryl)lysine mark is found at Lys-88, Lys-93, and Lys-109. The segment at Gln-98–Lys-226 is disordered. Basic residues predominate over residues Lys-122–Lys-133. 2 positions are modified to phosphothreonine: Thr-138 and Thr-155. The span at Lys-140 to Lys-161 shows a compositional bias: basic residues. Position 168 is an N6-acetyllysine (Lys-168). Over residues Lys-169–Thr-187 the composition is skewed to basic residues. 2 positions are modified to phosphoserine: Ser-173 and Ser-189. The segment covering Lys-194–Lys-226 has biased composition (basic residues).

The protein belongs to the histone H1/H5 family. As to quaternary structure, interacts with MSX1. In terms of processing, H1 histones are progressively phosphorylated during the cell cycle, becoming maximally phosphorylated during late G2 phase and M phase, and being dephosphorylated sharply thereafter. Phosphorylated at Thr-11 by GSK3B during mitosis in prometaphase and dephosphorylated in telophase. Post-translationally, citrullination at Arg-57 (H1R54ci) by PADI4 takes place within the DNA-binding site of H1 and results in its displacement from chromatin and global chromatin decondensation, thereby promoting pluripotency and stem cell maintenance. As to expression, ubiquitous. Expressed in the majority of the cell lines tested and in testis.

The protein localises to the nucleus. It localises to the chromosome. Its function is as follows. Histone H1 protein binds to linker DNA between nucleosomes forming the macromolecular structure known as the chromatin fiber. Histones H1 are necessary for the condensation of nucleosome chains into higher-order structured fibers. Also acts as a regulator of individual gene transcription through chromatin remodeling, nucleosome spacing and DNA methylation. The protein is Histone H1.5 of Homo sapiens (Human).